Consider the following 105-residue polypeptide: Nucleoid-associated protein SSP2277 (105 aa).

The disordered stretch occupies residues 1–41; the sequence is MRGGGNMQQMMKQMQKMQKKMGEEQEKLKEEKVQGTAGGGM. Positions 7-16 are enriched in low complexity; that stretch reads MQQMMKQMQK. Basic and acidic residues predominate over residues 20–33; it reads KMGEEQEKLKEEKV.

This sequence belongs to the YbaB/EbfC family. In terms of assembly, homodimer.

It is found in the cytoplasm. It localises to the nucleoid. Its function is as follows. Binds to DNA and alters its conformation. May be involved in regulation of gene expression, nucleoid organization and DNA protection. This Staphylococcus saprophyticus subsp. saprophyticus (strain ATCC 15305 / DSM 20229 / NCIMB 8711 / NCTC 7292 / S-41) protein is Nucleoid-associated protein SSP2277.